The primary structure comprises 110 residues: MSEFKRIPPEQALELRKQEGAVVVDIRDAQAFAAGHITGARHLDNHSVADFIRGANLDAPTLVVCYHGNSSQSAAAYLVGQGFSDVYSVDGGFELWRATYPAETAQGAAE.

In terms of domain architecture, Rhodanese spans 17–105 (KQEGAVVVDI…WRATYPAETA (89 aa)). Cysteine 65 (cysteine persulfide intermediate) is an active-site residue.

Belongs to the GlpE family.

The protein localises to the cytoplasm. The enzyme catalyses thiosulfate + hydrogen cyanide = thiocyanate + sulfite + 2 H(+). It carries out the reaction thiosulfate + [thioredoxin]-dithiol = [thioredoxin]-disulfide + hydrogen sulfide + sulfite + 2 H(+). Functionally, transferase that catalyzes the transfer of sulfur from thiosulfate to thiophilic acceptors such as cyanide or dithiols. May function in a CysM-independent thiosulfate assimilation pathway by catalyzing the conversion of thiosulfate to sulfite, which can then be used for L-cysteine biosynthesis. This chain is Thiosulfate sulfurtransferase GlpE, found in Pseudomonas putida (strain GB-1).